Reading from the N-terminus, the 317-residue chain is MTTEYLDFELPIAELEAKIEALRSAVGNDNKINLDDEIARLQKKSEELTKKTFSDLDAWQISRMARHPSRPYTLDYIERIFTEFDELAGDRAFADDKAIVGGIARLDGRPVMVIGHQKGRTVKEKVKRNFGMPAPEGYRKALRLMQMAERFNMPIITFIDTPGAYPGIGAEERGQSEAIARNLREMSTLKVPVICTVIGEGGSGGALAIGVGDKVNMLQYSTYSVISPEGCASILWKSAEKASTAAEVMGLTAPRLKELELIDNIVPEPLGGAHRNFDEMAANLKQRLLEDLADLDPLNAEALLDRRYQRLMGYGYV.

Positions 33-294 (NLDDEIARLQ…KQRLLEDLAD (262 aa)) constitute a CoA carboxyltransferase C-terminal domain.

It belongs to the AccA family. Acetyl-CoA carboxylase is a heterohexamer composed of biotin carboxyl carrier protein (AccB), biotin carboxylase (AccC) and two subunits each of ACCase subunit alpha (AccA) and ACCase subunit beta (AccD).

It is found in the cytoplasm. The enzyme catalyses N(6)-carboxybiotinyl-L-lysyl-[protein] + acetyl-CoA = N(6)-biotinyl-L-lysyl-[protein] + malonyl-CoA. It functions in the pathway lipid metabolism; malonyl-CoA biosynthesis; malonyl-CoA from acetyl-CoA: step 1/1. Its function is as follows. Component of the acetyl coenzyme A carboxylase (ACC) complex. First, biotin carboxylase catalyzes the carboxylation of biotin on its carrier protein (BCCP) and then the CO(2) group is transferred by the carboxyltransferase to acetyl-CoA to form malonyl-CoA. This chain is Acetyl-coenzyme A carboxylase carboxyl transferase subunit alpha, found in Glaesserella parasuis serovar 5 (strain SH0165) (Haemophilus parasuis).